The primary structure comprises 177 residues: Coatomer subunit zeta-1 (177 aa).

The protein belongs to the adaptor complexes small subunit family. In terms of assembly, oligomeric complex that consists of at least the alpha, beta, beta', gamma, delta, epsilon and zeta subunits.

Its subcellular location is the cytoplasm. The protein resides in the golgi apparatus membrane. The protein localises to the cytoplasmic vesicle. It localises to the COPI-coated vesicle membrane. In terms of biological role, the coatomer is a cytosolic protein complex that binds to dilysine motifs and reversibly associates with Golgi non-clathrin-coated vesicles, which further mediate biosynthetic protein transport from the ER, via the Golgi up to the trans Golgi network. Coatomer complex is required for budding from Golgi membranes, and is essential for the retrograde Golgi-to-ER transport of dilysine-tagged proteins. The zeta subunit may be involved in regulating the coat assembly and, hence, the rate of biosynthetic protein transport due to its association-dissociation properties with the coatomer complex. The sequence is that of Coatomer subunit zeta-1 from Arabidopsis thaliana (Mouse-ear cress).